The primary structure comprises 36 residues: ACKDNFAAATCKHVKENKNCGSQKYATNCAKTCGKC.

Positions 2-36 (CKDNFAAATCKHVKENKNCGSQKYATNCAKTCGKC) constitute a ShKT domain. Intrachain disulfides connect cysteine 2–cysteine 36, cysteine 11–cysteine 29, and cysteine 20–cysteine 33. The tract at residues 24-25 (KY) is crucial for binding to potassium channels.

It belongs to the sea anemone type 1 potassium channel toxin family. Type 1b subfamily.

It is found in the secreted. Its subcellular location is the nematocyst. Blocks voltage-gated potassium channels Kv1.2/KCNA2 (IC(50)=140 nM). This is Kappa-actitoxin-Avd6a from Anemonia sulcata (Mediterranean snakelocks sea anemone).